Here is a 624-residue protein sequence, read N- to C-terminus: ADP,ATP carrier protein 1, chloroplastic (624 aa).

The transit peptide at 1 to 79 directs the protein to the chloroplast; the sequence is MEAVIQTRGL…KERSTEFICK (79 aa). Residue alanine 80 is modified to N-acetylalanine. Transmembrane regions (helical) follow at residues 108-128, 182-202, 240-260, 315-335, 446-466, and 545-565; these read VEVA…CILF, ALFY…GFVM, LFYV…FWGF, AMMS…WWVN, LLTG…APLV, and LANS…AWLA. Positions 579-624 are disordered; the sequence is SEEELEKEMERASSVKIPVVSQDESGNGSLGESPSSSPEKSAPTNL. Positions 602–624 are enriched in low complexity; that stretch reads ESGNGSLGESPSSSPEKSAPTNL.

The protein belongs to the ADP/ATP translocase tlc (TC 2.A.12.2) family.

Its subcellular location is the plastid. It localises to the chloroplast membrane. Its function is as follows. May function as an ATP importer. The protein is ADP,ATP carrier protein 1, chloroplastic (AATP1) of Arabidopsis thaliana (Mouse-ear cress).